A 621-amino-acid polypeptide reads, in one-letter code: Pentatricopeptide repeat-containing protein At3g48250, chloroplastic (621 aa).

The N-terminal 67 residues, 1–67 (MYRSMAILSS…SKPDSMLQLV (67 aa)), are a transit peptide targeting the chloroplast. PPR repeat units follow at residues 122-156 (STPL…GFYL), 157-194 (DEDT…NAMS), 262-296 (STVT…GYDM), 297-331 (DLDT…PFKP), 332-368 (SIQD…GKSL), 369-403 (SKAV…GYEP), 404-438 (DNIT…GCFP), 439-473 (DIKT…GFDI), 474-509 (DSNL…NVKP), and 510-544 (WQST…NYPA).

This sequence belongs to the PPR family. P subfamily.

The protein localises to the plastid. The protein resides in the chloroplast. The chain is Pentatricopeptide repeat-containing protein At3g48250, chloroplastic from Arabidopsis thaliana (Mouse-ear cress).